Consider the following 1230-residue polypeptide: Cullin-associated NEDD8-dissociated protein 1 (1230 aa).

Alanine 2 is modified (N-acetylalanine). 12 HEAT repeats span residues alanine 2–isoleucine 39, aspartate 44–glutamate 81, glutamine 83–proline 119, cysteine 131–glutamine 165, asparagine 171–asparagine 208, valine 210–histidine 247, arginine 248–phenylalanine 282, glutamate 289–glutamate 366, glutamate 370–proline 407, proline 424–glycine 467, glutamine 471–proline 510, and proline 515–proline 552. The tract at residues aspartate 315 to aspartate 344 is disordered. Phosphoserine is present on serine 335. At serine 558 the chain carries Phosphoserine. HEAT repeat units follow at residues proline 563–aspartate 602, proline 606–aspartate 643, proline 646–aspartate 683, alanine 688–serine 725, lysine 729–asparagine 768, leucine 770–arginine 808, alanine 809–valine 845, serine 852–proline 889, glutamate 890–proline 927, tyrosine 928–leucine 960, isoleucine 961–glutamine 998, proline 1002–serine 1039, aspartate 1043–leucine 1097, arginine 1099–leucine 1133, and glutamine 1140–alanine 1189. The residue at position 971 (lysine 971) is an N6-acetyllysine.

It belongs to the CAND family. In terms of assembly, interacts with TBP. Part of a complex that contains CUL1 and RBX1. Interacts with unneddylated cullins: interacts with CUL1, CUL2, CUL3, CUL4A, CUL4B and CUL5. Does not bind neddylated CUL1. Interaction with cullins is abolished in presence of COMMD1, which antagonizes with CAND1 for interacting with cullins. Interacts with ERCC6. Interacts with DCUN1D1, DCUN1D2, DCUN1D3, DCUN1D4 and DCUN1D5; these interactions are bridged by cullins and strongly inhibits the neddylation of cullins.

The protein localises to the cytoplasm. The protein resides in the nucleus. Its function is as follows. Key assembly factor of SCF (SKP1-CUL1-F-box protein) E3 ubiquitin ligase complexes that promotes the exchange of the substrate-recognition F-box subunit in SCF complexes, thereby playing a key role in the cellular repertoire of SCF complexes. Acts as a F-box protein exchange factor. The exchange activity of CAND1 is coupled with cycles of neddylation conjugation: in the deneddylated state, cullin-binding CAND1 binds CUL1-RBX1, increasing dissociation of the SCF complex and promoting exchange of the F-box protein. Probably plays a similar role in other cullin-RING E3 ubiquitin ligase complexes. The sequence is that of Cullin-associated NEDD8-dissociated protein 1 (Cand1) from Mus musculus (Mouse).